The chain runs to 195 residues: Probable nicotinate-nucleotide adenylyltransferase (195 aa).

The protein belongs to the NadD family.

It catalyses the reaction nicotinate beta-D-ribonucleotide + ATP + H(+) = deamido-NAD(+) + diphosphate. It participates in cofactor biosynthesis; NAD(+) biosynthesis; deamido-NAD(+) from nicotinate D-ribonucleotide: step 1/1. In terms of biological role, catalyzes the reversible adenylation of nicotinate mononucleotide (NaMN) to nicotinic acid adenine dinucleotide (NaAD). This chain is Probable nicotinate-nucleotide adenylyltransferase, found in Bordetella petrii (strain ATCC BAA-461 / DSM 12804 / CCUG 43448).